Consider the following 321-residue polypeptide: L-carnitine dehydrogenase (321 aa).

Position 14–19 (14–19 (GAGVIG)) interacts with NAD(+).

This sequence belongs to the 3-hydroxyacyl-CoA dehydrogenase family. L-carnitine dehydrogenase subfamily. In terms of assembly, homodimer.

It localises to the cytoplasm. The catalysed reaction is carnitine + NAD(+) = 3-dehydrocarnitine + NADH + H(+). It participates in amine and polyamine metabolism; carnitine metabolism. Functionally, catalyzes the NAD(+)-dependent oxidation of L-carnitine to 3-dehydrocarnitine. This chain is L-carnitine dehydrogenase, found in Burkholderia mallei (strain ATCC 23344).